A 165-amino-acid polypeptide reads, in one-letter code: Large ribosomal subunit protein uL10 (165 aa).

Belongs to the universal ribosomal protein uL10 family. Part of the ribosomal stalk of the 50S ribosomal subunit. The N-terminus interacts with L11 and the large rRNA to form the base of the stalk. The C-terminus forms an elongated spine to which L12 dimers bind in a sequential fashion forming a multimeric L10(L12)X complex.

Forms part of the ribosomal stalk, playing a central role in the interaction of the ribosome with GTP-bound translation factors. The polypeptide is Large ribosomal subunit protein uL10 (Burkholderia cenocepacia (strain HI2424)).